Here is a 506-residue protein sequence, read N- to C-terminus: Lysine--tRNA ligase (506 aa).

Mg(2+) is bound by residues glutamate 416 and glutamate 423.

This sequence belongs to the class-II aminoacyl-tRNA synthetase family. As to quaternary structure, homodimer. Mg(2+) is required as a cofactor.

Its subcellular location is the cytoplasm. It catalyses the reaction tRNA(Lys) + L-lysine + ATP = L-lysyl-tRNA(Lys) + AMP + diphosphate. The chain is Lysine--tRNA ligase from Xylella fastidiosa (strain M12).